Reading from the N-terminus, the 921-residue chain is Isoleucine--tRNA ligase (921 aa).

The 'HIGH' region signature appears at 57–67 (PYANGDIHMGH). E553 is an L-isoleucyl-5'-AMP binding site. Positions 594-598 (KMSKS) match the 'KMSKS' region motif. K597 is a binding site for ATP.

It belongs to the class-I aminoacyl-tRNA synthetase family. IleS type 1 subfamily. In terms of assembly, monomer.

Its subcellular location is the cytoplasm. The enzyme catalyses tRNA(Ile) + L-isoleucine + ATP = L-isoleucyl-tRNA(Ile) + AMP + diphosphate. Functionally, catalyzes the attachment of isoleucine to tRNA(Ile). As IleRS can inadvertently accommodate and process structurally similar amino acids such as valine, to avoid such errors it has two additional distinct tRNA(Ile)-dependent editing activities. One activity is designated as 'pretransfer' editing and involves the hydrolysis of activated Val-AMP. The other activity is designated 'posttransfer' editing and involves deacylation of mischarged Val-tRNA(Ile). In Bacillus subtilis (strain 168), this protein is Isoleucine--tRNA ligase.